The primary structure comprises 343 residues: Endoglucanase C (343 aa).

Glutamate 140 serves as the catalytic Proton donor. The active-site Nucleophile is the glutamate 280.

It belongs to the glycosyl hydrolase 5 (cellulase A) family.

The catalysed reaction is Endohydrolysis of (1-&gt;4)-beta-D-glucosidic linkages in cellulose, lichenin and cereal beta-D-glucans.. It functions in the pathway glycan metabolism; cellulose degradation. Functionally, this enzyme catalyzes the endohydrolysis of 1,4-beta-glucosidic linkages in cellulose, lichenin and cereal beta-D-glucans. The chain is Endoglucanase C (celC) from Acetivibrio thermocellus (strain ATCC 27405 / DSM 1237 / JCM 9322 / NBRC 103400 / NCIMB 10682 / NRRL B-4536 / VPI 7372) (Clostridium thermocellum).